A 256-amino-acid polypeptide reads, in one-letter code: 3-deoxy-manno-octulosonate cytidylyltransferase (256 aa).

This sequence belongs to the KdsB family.

The protein localises to the cytoplasm. It carries out the reaction 3-deoxy-alpha-D-manno-oct-2-ulosonate + CTP = CMP-3-deoxy-beta-D-manno-octulosonate + diphosphate. It functions in the pathway nucleotide-sugar biosynthesis; CMP-3-deoxy-D-manno-octulosonate biosynthesis; CMP-3-deoxy-D-manno-octulosonate from 3-deoxy-D-manno-octulosonate and CTP: step 1/1. The protein operates within bacterial outer membrane biogenesis; lipopolysaccharide biosynthesis. Its function is as follows. Activates KDO (a required 8-carbon sugar) for incorporation into bacterial lipopolysaccharide in Gram-negative bacteria. This is 3-deoxy-manno-octulosonate cytidylyltransferase from Histophilus somni (strain 2336) (Haemophilus somnus).